The chain runs to 371 residues: MSL complex subunit 3B (371 aa).

Disordered stretches follow at residues 1-44 (MATL…READ) and 160-229 (EERA…SPQA). Residues 8-44 (PKDDGEGKDEGGSDRGDGDPKPKGKKEVEAHTRREAD) show a composition bias toward basic and acidic residues. Residues 44 to 367 (DERAVRIPIP…CEAHYSSKNP (324 aa)) form the MRG domain. A compositionally biased stretch (basic residues) spans 206-216 (APRRSTRHSTH).

The protein localises to the nucleus. Its function is as follows. Probable non-catalytic component of the MSL histone acetyltransferase complex, a multiprotein complex that mediates the majority of histone H4 acetylation at 'Lys-16' (H4K16ac), an epigenetic mark that prevents chromatin compaction. The polypeptide is MSL complex subunit 3B (Rattus norvegicus (Rat)).